The sequence spans 714 residues: DNA ligase (714 aa).

Residues D47–D51, S96–L97, and E128 contribute to the NAD(+) site. K130 acts as the N6-AMP-lysine intermediate in catalysis. The NAD(+) site is built by R151, E188, K306, and K330. 4 residues coordinate Zn(2+): C435, C438, C453, and C459. The BRCT domain occupies R637–S714.

It belongs to the NAD-dependent DNA ligase family. LigA subfamily. Mg(2+) is required as a cofactor. The cofactor is Mn(2+).

The enzyme catalyses NAD(+) + (deoxyribonucleotide)n-3'-hydroxyl + 5'-phospho-(deoxyribonucleotide)m = (deoxyribonucleotide)n+m + AMP + beta-nicotinamide D-nucleotide.. Its function is as follows. DNA ligase that catalyzes the formation of phosphodiester linkages between 5'-phosphoryl and 3'-hydroxyl groups in double-stranded DNA using NAD as a coenzyme and as the energy source for the reaction. It is essential for DNA replication and repair of damaged DNA. In Rhodopseudomonas palustris (strain HaA2), this protein is DNA ligase.